The primary structure comprises 207 residues: Dephospho-CoA kinase (207 aa).

Residues 5–207 (IVGLTGGIAS…AALQTHRIEN (203 aa)) form the DPCK domain. Position 13–18 (13–18 (ASGKSA)) interacts with ATP.

This sequence belongs to the CoaE family.

The protein resides in the cytoplasm. It catalyses the reaction 3'-dephospho-CoA + ATP = ADP + CoA + H(+). Its pathway is cofactor biosynthesis; coenzyme A biosynthesis; CoA from (R)-pantothenate: step 5/5. Functionally, catalyzes the phosphorylation of the 3'-hydroxyl group of dephosphocoenzyme A to form coenzyme A. The chain is Dephospho-CoA kinase from Xanthomonas campestris pv. campestris (strain ATCC 33913 / DSM 3586 / NCPPB 528 / LMG 568 / P 25).